Here is a 235-residue protein sequence, read N- to C-terminus: MRFDPPLEEGHLLRRYKRFFADIETPDGEALCIHCPNTGSMFNCMAEGGRVWFSRSNDPRRKLPGTWELSETPQGRLACVNTARANPLVEEALRAGSIAELTGFTGLRREVRYGLENSRVDFCLDYPDGTAFVEVKSVTLGFADSPVAAFPDARTERGAKHLRELAVLARQGVRTVQLYCVNLSGIAAVRPAAEIDPGYAQALREAVAAGVEVLAYGAELSPAAIRLVRRLEVCL.

This sequence belongs to the SfsA family.

In Azotobacter vinelandii (strain DJ / ATCC BAA-1303), this protein is Sugar fermentation stimulation protein homolog.